Reading from the N-terminus, the 118-residue chain is Ribonuclease P protein component (118 aa).

It belongs to the RnpA family. Consists of a catalytic RNA component (M1 or rnpB) and a protein subunit.

It carries out the reaction Endonucleolytic cleavage of RNA, removing 5'-extranucleotides from tRNA precursor.. Functionally, RNaseP catalyzes the removal of the 5'-leader sequence from pre-tRNA to produce the mature 5'-terminus. It can also cleave other RNA substrates such as 4.5S RNA. The protein component plays an auxiliary but essential role in vivo by binding to the 5'-leader sequence and broadening the substrate specificity of the ribozyme. In Shewanella frigidimarina (strain NCIMB 400), this protein is Ribonuclease P protein component.